The primary structure comprises 97 residues: Small ribosomal subunit protein uS19 (97 aa).

The protein belongs to the universal ribosomal protein uS19 family.

Protein S19 forms a complex with S13 that binds strongly to the 16S ribosomal RNA. In Salinibacter ruber (strain DSM 13855 / M31), this protein is Small ribosomal subunit protein uS19.